Here is a 284-residue protein sequence, read N- to C-terminus: MEMO1 family protein MmarC5_0191 (284 aa).

This sequence belongs to the MEMO1 family.

This is MEMO1 family protein MmarC5_0191 from Methanococcus maripaludis (strain C5 / ATCC BAA-1333).